The sequence spans 392 residues: MNNFTYTLEHSDGEARAGQFSTPHGTIQTPVFMPVGTQATVKTLDPLEVEAIGSQIILSNTYHLYLRPSADLVAEMGGLHRFMQWPKPILTDSGGFQVFSLGPHSKIDEDGVTFKSHIDGSKHRFTPESAIGIQEKLGADIIMAFDECAPQPTTHAYTKAAMERTHRWLLRCIAAKTRADQALFGIVQGGVEADLRRESASFIAQQDVPGIGIGGLSVGEPKEQMYGMLEETTPLLPRNKPRYLMGVGSPEDLLEGVARGVDMFDCVLPTRLGRNGALFIPEGRLNIGNAKYAREDAPIDATCDCSTCQRFSRAYLRHLFRTEEVLGLRLATLHNLRFLIRLMEQAREAILQDRYQSFMDDWLSRFQTIPHAVREASRAARLNSLRTQGDKA.

Aspartate 92 acts as the Proton acceptor in catalysis. Residues 92-96, aspartate 146, glutamine 188, and glycine 215 each bind substrate; that span reads DSGGF. The tract at residues 246 to 252 is RNA binding; the sequence is GVGSPED. Aspartate 265 acts as the Nucleophile in catalysis. Positions 270-274 are RNA binding; important for wobble base 34 recognition; the sequence is TRLGR. The Zn(2+) site is built by cysteine 303, cysteine 305, cysteine 308, and histidine 334.

The protein belongs to the queuine tRNA-ribosyltransferase family. In terms of assembly, homodimer. Within each dimer, one monomer is responsible for RNA recognition and catalysis, while the other monomer binds to the replacement base PreQ1. Zn(2+) serves as cofactor.

The enzyme catalyses 7-aminomethyl-7-carbaguanine + guanosine(34) in tRNA = 7-aminomethyl-7-carbaguanosine(34) in tRNA + guanine. It participates in tRNA modification; tRNA-queuosine biosynthesis. In terms of biological role, catalyzes the base-exchange of a guanine (G) residue with the queuine precursor 7-aminomethyl-7-deazaguanine (PreQ1) at position 34 (anticodon wobble position) in tRNAs with GU(N) anticodons (tRNA-Asp, -Asn, -His and -Tyr). Catalysis occurs through a double-displacement mechanism. The nucleophile active site attacks the C1' of nucleotide 34 to detach the guanine base from the RNA, forming a covalent enzyme-RNA intermediate. The proton acceptor active site deprotonates the incoming PreQ1, allowing a nucleophilic attack on the C1' of the ribose to form the product. After dissociation, two additional enzymatic reactions on the tRNA convert PreQ1 to queuine (Q), resulting in the hypermodified nucleoside queuosine (7-(((4,5-cis-dihydroxy-2-cyclopenten-1-yl)amino)methyl)-7-deazaguanosine). In Herpetosiphon aurantiacus (strain ATCC 23779 / DSM 785 / 114-95), this protein is Queuine tRNA-ribosyltransferase.